Here is a 480-residue protein sequence, read N- to C-terminus: Iron-sulfur cluster assembly SufBD family protein slr0074 (480 aa).

This sequence belongs to the iron-sulfur cluster assembly SufBD family.

In Synechocystis sp. (strain ATCC 27184 / PCC 6803 / Kazusa), this protein is Iron-sulfur cluster assembly SufBD family protein slr0074.